The following is an 883-amino-acid chain: Integrator complex subunit 6-A (883 aa).

Positions Ile-3–Val-227 constitute a VWFA domain. The short motif at Met-626–Glu-633 is the Inhibitory loop element.

This sequence belongs to the Integrator subunit 6 family. In terms of assembly, component of the Integrator complex, composed of core subunits INTS1, INTS2, INTS3, INTS4, INTS5, INTS6, INTS7, INTS8, INTS9/RC74, INTS10, INTS11/CPSF3L, INTS12, INTS13, INTS14 and INTS15. The core complex associates with protein phosphatase 2A subunits PPP2CA and PPP2R1A, to form the Integrator-PP2A (INTAC) complex.

Its subcellular location is the nucleus. The protein localises to the chromosome. Its function is as follows. Component of the integrator complex, a multiprotein complex that terminates RNA polymerase II (Pol II) transcription in the promoter-proximal region of genes. The integrator complex provides a quality checkpoint during transcription elongation by driving premature transcription termination of transcripts that are unfavorably configured for transcriptional elongation: the complex terminates transcription by (1) catalyzing dephosphorylation of the C-terminal domain (CTD) of Pol II subunit POLR2A/RPB1 and SUPT5H/SPT5, (2) degrading the exiting nascent RNA transcript via endonuclease activity and (3) promoting the release of Pol II from bound DNA. The integrator complex is also involved in terminating the synthesis of non-coding Pol II transcripts, such as enhancer RNAs (eRNAs), small nuclear RNAs (snRNAs), telomerase RNAs and long non-coding RNAs (lncRNAs). Within the integrator complex, INTS6 acts as a molecular adapter that promotes assembly of protein phosphatase 2A (PP2A) subunits to the integrator core complex, promoting recruitment of PP2A to transcription pause-release checkpoint. This chain is Integrator complex subunit 6-A (ints6-a), found in Xenopus laevis (African clawed frog).